A 274-amino-acid chain; its full sequence is NH(3)-dependent NAD(+) synthetase (274 aa).

Residue 46-53 (GISGGQDS) coordinates ATP. Mg(2+) is bound at residue Asp52. Position 140 (Arg140) interacts with deamido-NAD(+). Residue Thr160 coordinates ATP. Mg(2+) is bound at residue Glu165. Positions 173 and 180 each coordinate deamido-NAD(+). Positions 189 and 211 each coordinate ATP. 260–261 (HK) is a deamido-NAD(+) binding site.

This sequence belongs to the NAD synthetase family. In terms of assembly, homodimer.

The enzyme catalyses deamido-NAD(+) + NH4(+) + ATP = AMP + diphosphate + NAD(+) + H(+). It participates in cofactor biosynthesis; NAD(+) biosynthesis; NAD(+) from deamido-NAD(+) (ammonia route): step 1/1. Catalyzes the ATP-dependent amidation of deamido-NAD to form NAD. Uses ammonia as a nitrogen source. In Streptococcus uberis (strain ATCC BAA-854 / 0140J), this protein is NH(3)-dependent NAD(+) synthetase.